Consider the following 142-residue polypeptide: Large ribosomal subunit protein uL11 (142 aa).

It belongs to the universal ribosomal protein uL11 family. As to quaternary structure, part of the ribosomal stalk of the 50S ribosomal subunit. Interacts with L10 and the large rRNA to form the base of the stalk. L10 forms an elongated spine to which L12 dimers bind in a sequential fashion forming a multimeric L10(L12)X complex. Post-translationally, one or more lysine residues are methylated.

Its function is as follows. Forms part of the ribosomal stalk which helps the ribosome interact with GTP-bound translation factors. This chain is Large ribosomal subunit protein uL11, found in Pseudoalteromonas translucida (strain TAC 125).